We begin with the raw amino-acid sequence, 211 residues long: Large ribosomal subunit protein eL13 (211 aa).

It belongs to the eukaryotic ribosomal protein eL13 family. In terms of assembly, component of the 60S large ribosomal subunit (LSU).

It localises to the cytoplasm. Functionally, component of the ribosome, a large ribonucleoprotein complex responsible for the synthesis of proteins in the cell. The small ribosomal subunit (SSU) binds messenger RNAs (mRNAs) and translates the encoded message by selecting cognate aminoacyl-transfer RNA (tRNA) molecules. The large subunit (LSU) contains the ribosomal catalytic site termed the peptidyl transferase center (PTC), which catalyzes the formation of peptide bonds, thereby polymerizing the amino acids delivered by tRNAs into a polypeptide chain. The nascent polypeptides leave the ribosome through a tunnel in the LSU and interact with protein factors that function in enzymatic processing, targeting, and the membrane insertion of nascent chains at the exit of the ribosomal tunnel. As part of the LSU, it is probably required for its formation and the maturation of rRNAs. This Gallus gallus (Chicken) protein is Large ribosomal subunit protein eL13 (RPL13).